A 1109-amino-acid chain; its full sequence is Ankyrin repeat- and BTB/POZ domain-containing protein 3 (1109 aa).

A helical membrane pass occupies residues 168-188 (IVLSWGLAAHCTAAALAALSL). The tract at residues 260–302 (SCSGPGPGSSSGSGPGPGSGPGAPAADKERETPGGGAASGGPC) is disordered. Gly residues predominate over residues 264–280 (PGPGSSSGSGPGPGSGP). ANK repeat units follow at residues 608–637 (QGMT…DLNV), 654–683 (RHWT…KVEG), 692–721 (YSET…DPLI), 735–764 (GDMN…KEKS), and 830–859 (TWLE…TIQE). A BTB domain is found at 928–994 (SDVTFLVEGR…LYYGGPESLL (67 aa)).

The protein resides in the membrane. The chain is Ankyrin repeat- and BTB/POZ domain-containing protein 3 (Abtb3) from Mus musculus (Mouse).